The chain runs to 608 residues: Mitochondrial import receptor subunit TOM70 (608 aa).

Residue Ala-2 is modified to N-acetylalanine. The Mitochondrial intermembrane segment spans residues 2–38; it reads AASKPVEAAVVAAAVPSSGSGVGGGGTAGPGTGGLPR. Residues 39 to 59 traverse the membrane as a helical segment; that stretch reads WQLALAVGAPLLLGAGAIYLW. Topologically, residues 60–608 are cytoplasmic; that stretch reads SRQQRRREAR…KKYGLKPPTL (549 aa). Residues 67 to 107 form a disordered region; that stretch reads EARGRGDASGLKRNSERKTPEGRASPAPGSGHPEGPGAHLD. At Arg-71 the chain carries Omega-N-methylarginine. Phosphoserine is present on residues Ser-91, Ser-96, and Ser-110. 2 TPR repeats span residues 114 to 147 and 153 to 186; these read AQAA…CPTE and STFY…NPKY. Lys-185 carries the N6-acetyllysine modification. Lys-275 is covalently cross-linked (Glycyl lysine isopeptide (Lys-Gly) (interchain with G-Cter in SUMO2)). 8 TPR repeats span residues 294–327, 329–362, 367–400, 401–434, 440–475, 476–509, 511–544, and 545–578; these read ENSG…EGKY, AEAL…KEAN, ANAL…DPQN, ADVY…RPES, QKCF…FPRC, AEGY…EPDN, TTYV…DNKC, and DFAY…AKSE. Ser-434 is subject to Phosphoserine.

This sequence belongs to the Tom70 family. Forms part of the preprotein translocase complex of the outer mitochondrial membrane (TOM complex) which consists of at least 7 different proteins (TOMM5, TOMM6, TOMM7, TOMM20, TOMM22, TOMM40 and TOMM70). Interacts with CAPN8. Interacts with TRADD, TRAF6 and STING. Interacts with MAVS; the interaction is enhanced by Sendai virus infection. Interacts with HSPA8 and HSP90AA1; both interactions are required for preprotein mitochondrial import. The interaction with HSP90AA1 is direct and mediates the association of TOMM70 with IRF3 and TBK1. Upon mitochondrial depolarization, interacts with PINK1; the interaction is required for PINK1-TOM-TIM23 supercomplex formation which is critical for PINK1 stabilization at the outer mitochondrial membrane, kinase activation and downstream mitophagy. In terms of assembly, (Microbial infection) Interacts (via C-terminus) with SARS coronaviru/SARS-CoV and SARS coronavirus-2/SARS-CoV-2 virus protein ORF9b. As to quaternary structure, (Microbial infection) Interacts with parasite T.gondii RH strain MAF1b1; the interaction impairs TOMM70 import activity, enables the parasite to associate with the host mitochondria and facilitates the association of MAF1b1 with MIB complex component SAMM50, promoting the formation of SPOTs (structures positive for outer mitochondrial membrane (OMM)); the interaction is probably indirect.

It localises to the mitochondrion outer membrane. Acts as a receptor of the preprotein translocase complex of the outer mitochondrial membrane (TOM complex). Recognizes and mediates the translocation of mitochondrial preproteins from the cytosol into the mitochondria in a chaperone dependent manner. Mediates TBK1 and IRF3 activation induced by MAVS in response to Sendai virus infection and promotes host antiviral responses during virus infection. Upon Sendai virus infection, recruits HSP90AA1:IRF3:BAX in mitochondrion and the complex induces apoptosis. The chain is Mitochondrial import receptor subunit TOM70 from Homo sapiens (Human).